Reading from the N-terminus, the 929-residue chain is Bifunctional glutamine synthetase adenylyltransferase/adenylyl-removing enzyme (929 aa).

Positions 1 to 422 are adenylyl removase; sequence MTTPISTSRA…TRHFEQIFAV (422 aa). The interval 429-929 is adenylyl transferase; sequence LGTFARIRPE…FQLWEDVFGT (501 aa).

The protein belongs to the GlnE family. Mg(2+) is required as a cofactor.

It catalyses the reaction [glutamine synthetase]-O(4)-(5'-adenylyl)-L-tyrosine + phosphate = [glutamine synthetase]-L-tyrosine + ADP. The catalysed reaction is [glutamine synthetase]-L-tyrosine + ATP = [glutamine synthetase]-O(4)-(5'-adenylyl)-L-tyrosine + diphosphate. In terms of biological role, involved in the regulation of glutamine synthetase GlnA, a key enzyme in the process to assimilate ammonia. When cellular nitrogen levels are high, the C-terminal adenylyl transferase (AT) inactivates GlnA by covalent transfer of an adenylyl group from ATP to specific tyrosine residue of GlnA, thus reducing its activity. Conversely, when nitrogen levels are low, the N-terminal adenylyl removase (AR) activates GlnA by removing the adenylyl group by phosphorolysis, increasing its activity. The regulatory region of GlnE binds the signal transduction protein PII (GlnB) which indicates the nitrogen status of the cell. The protein is Bifunctional glutamine synthetase adenylyltransferase/adenylyl-removing enzyme of Nitrosomonas eutropha (strain DSM 101675 / C91 / Nm57).